Consider the following 212-residue polypeptide: Large ribosomal subunit protein uL3 (212 aa).

The tract at residues 133–152 (RGSMGHGSKYHRRPGSLGAK) is disordered.

It belongs to the universal ribosomal protein uL3 family. In terms of assembly, part of the 50S ribosomal subunit. Forms a cluster with proteins L14 and L19.

Its function is as follows. One of the primary rRNA binding proteins, it binds directly near the 3'-end of the 23S rRNA, where it nucleates assembly of the 50S subunit. The sequence is that of Large ribosomal subunit protein uL3 from Syntrophomonas wolfei subsp. wolfei (strain DSM 2245B / Goettingen).